The sequence spans 216 residues: 4-hydroxy-tetrahydrodipicolinate reductase (216 aa).

NAD(+) contacts are provided by residues 7-12 (GYSGRM), 71-73 (GTT), and 95-98 (AYNF). Residue His-127 is the Proton donor/acceptor of the active site. A (S)-2,3,4,5-tetrahydrodipicolinate-binding site is contributed by His-128. The active-site Proton donor is Lys-131. Position 137–138 (137–138 (GT)) interacts with (S)-2,3,4,5-tetrahydrodipicolinate.

It belongs to the DapB family.

Its subcellular location is the cytoplasm. The enzyme catalyses (S)-2,3,4,5-tetrahydrodipicolinate + NAD(+) + H2O = (2S,4S)-4-hydroxy-2,3,4,5-tetrahydrodipicolinate + NADH + H(+). It carries out the reaction (S)-2,3,4,5-tetrahydrodipicolinate + NADP(+) + H2O = (2S,4S)-4-hydroxy-2,3,4,5-tetrahydrodipicolinate + NADPH + H(+). The protein operates within amino-acid biosynthesis; L-lysine biosynthesis via DAP pathway; (S)-tetrahydrodipicolinate from L-aspartate: step 4/4. Catalyzes the conversion of 4-hydroxy-tetrahydrodipicolinate (HTPA) to tetrahydrodipicolinate. This is 4-hydroxy-tetrahydrodipicolinate reductase from Thermotoga sp. (strain RQ2).